The sequence spans 391 residues: S-adenosylmethionine synthase (391 aa).

Residue H14 coordinates ATP. D16 is a Mg(2+) binding site. E42 contacts K(+). 2 residues coordinate L-methionine: E55 and Q98. The tract at residues 98 to 108 is flexible loop; that stretch reads QSVDIAMGVDE. ATP contacts are provided by residues 172-174, 238-239, D247, 253-254, A270, and K274; these read DGK, RF, and RK. D247 contributes to the L-methionine binding site. L-methionine is bound at residue K278.

This sequence belongs to the AdoMet synthase family. In terms of assembly, homotetramer; dimer of dimers. Mg(2+) serves as cofactor. It depends on K(+) as a cofactor.

Its subcellular location is the cytoplasm. It catalyses the reaction L-methionine + ATP + H2O = S-adenosyl-L-methionine + phosphate + diphosphate. It functions in the pathway amino-acid biosynthesis; S-adenosyl-L-methionine biosynthesis; S-adenosyl-L-methionine from L-methionine: step 1/1. In terms of biological role, catalyzes the formation of S-adenosylmethionine (AdoMet) from methionine and ATP. The overall synthetic reaction is composed of two sequential steps, AdoMet formation and the subsequent tripolyphosphate hydrolysis which occurs prior to release of AdoMet from the enzyme. The sequence is that of S-adenosylmethionine synthase from Clostridium botulinum (strain Hall / ATCC 3502 / NCTC 13319 / Type A).